A 246-amino-acid chain; its full sequence is NAD(P)H-hydrate epimerase (246 aa).

The YjeF N-terminal domain occupies 12-234; that stretch reads AAEIDKELMG…DFANKFGFEP (223 aa). A (6S)-NADPHX-binding site is contributed by 69 to 73; that stretch reads NNGGD. K(+)-binding residues include Asn70 and Asp138. Residues 142 to 148 and Asp173 contribute to the (6S)-NADPHX site; that span reads GFSFKPP. Residue Thr176 participates in K(+) binding.

It belongs to the NnrE/AIBP family. K(+) is required as a cofactor.

The protein resides in the cytoplasm. It is found in the mitochondrion. It carries out the reaction (6R)-NADHX = (6S)-NADHX. The enzyme catalyses (6R)-NADPHX = (6S)-NADPHX. In terms of biological role, catalyzes the epimerization of the S- and R-forms of NAD(P)HX, a damaged form of NAD(P)H that is a result of enzymatic or heat-dependent hydration. This is a prerequisite for the S-specific NAD(P)H-hydrate dehydratase to allow the repair of both epimers of NAD(P)HX. The sequence is that of NAD(P)H-hydrate epimerase from Saccharomyces cerevisiae (strain ATCC 204508 / S288c) (Baker's yeast).